The chain runs to 445 residues: Tubulin beta chain (445 aa).

Residues glutamine 11, glutamate 69, serine 138, glycine 142, threonine 143, glycine 144, asparagine 204, and asparagine 226 each coordinate GTP. Glutamate 69 is a binding site for Mg(2+). The tract at residues 426–445 (QDATAEEEGEFEEEEGDVEA) is disordered. Residues 429-445 (TAEEEGEFEEEEGDVEA) are compositionally biased toward acidic residues.

The protein belongs to the tubulin family. Dimer of alpha and beta chains. A typical microtubule is a hollow water-filled tube with an outer diameter of 25 nm and an inner diameter of 15 nM. Alpha-beta heterodimers associate head-to-tail to form protofilaments running lengthwise along the microtubule wall with the beta-tubulin subunit facing the microtubule plus end conferring a structural polarity. Microtubules usually have 13 protofilaments but different protofilament numbers can be found in some organisms and specialized cells. Interacts with DCX/apicortin; the interaction stabilizes microtubule assembly. Mg(2+) serves as cofactor.

Its subcellular location is the cytoplasm. The protein localises to the cytoskeleton. Its function is as follows. Tubulin is the major constituent of microtubules, a cylinder consisting of laterally associated linear protofilaments composed of alpha- and beta-tubulin heterodimers. Microtubules grow by the addition of GTP-tubulin dimers to the microtubule end, where a stabilizing cap forms. Below the cap, tubulin dimers are in GDP-bound state, owing to GTPase activity of alpha-tubulin. This chain is Tubulin beta chain, found in Plasmodium falciparum (isolate 3D7).